The chain runs to 419 residues: L-rhamnose isomerase (419 aa).

Positions 262, 294, and 296 each coordinate Mn(2+).

Belongs to the rhamnose isomerase family. In terms of assembly, homotetramer. Requires Mn(2+) as cofactor.

The protein localises to the cytoplasm. It carries out the reaction L-rhamnopyranose = L-rhamnulose. Its pathway is carbohydrate degradation; L-rhamnose degradation; glycerone phosphate from L-rhamnose: step 1/3. Its function is as follows. Catalyzes the interconversion of L-rhamnose and L-rhamnulose. The chain is L-rhamnose isomerase from Citrobacter koseri (strain ATCC BAA-895 / CDC 4225-83 / SGSC4696).